Here is a 161-residue protein sequence, read N- to C-terminus: NADH-quinone oxidoreductase subunit C (161 aa).

This sequence belongs to the complex I 30 kDa subunit family. In terms of assembly, NDH-1 is composed of 14 different subunits. Subunits NuoB, C, D, E, F, and G constitute the peripheral sector of the complex.

The protein resides in the cell inner membrane. It catalyses the reaction a quinone + NADH + 5 H(+)(in) = a quinol + NAD(+) + 4 H(+)(out). NDH-1 shuttles electrons from NADH, via FMN and iron-sulfur (Fe-S) centers, to quinones in the respiratory chain. The immediate electron acceptor for the enzyme in this species is believed to be ubiquinone. Couples the redox reaction to proton translocation (for every two electrons transferred, four hydrogen ions are translocated across the cytoplasmic membrane), and thus conserves the redox energy in a proton gradient. The chain is NADH-quinone oxidoreductase subunit C from Citrifermentans bemidjiense (strain ATCC BAA-1014 / DSM 16622 / JCM 12645 / Bem) (Geobacter bemidjiensis).